Reading from the N-terminus, the 306-residue chain is Pantothenate kinase (306 aa).

An ATP-binding site is contributed by 91-98 (GSVAVGKS).

This sequence belongs to the prokaryotic pantothenate kinase family.

It localises to the cytoplasm. The enzyme catalyses (R)-pantothenate + ATP = (R)-4'-phosphopantothenate + ADP + H(+). Its pathway is cofactor biosynthesis; coenzyme A biosynthesis; CoA from (R)-pantothenate: step 1/5. This Streptococcus pneumoniae serotype 4 (strain ATCC BAA-334 / TIGR4) protein is Pantothenate kinase (coaA).